The sequence spans 203 residues: Putative 3-methyladenine DNA glycosylase (203 aa).

This sequence belongs to the DNA glycosylase MPG family.

In Clostridium botulinum (strain Loch Maree / Type A3), this protein is Putative 3-methyladenine DNA glycosylase.